Here is a 496-residue protein sequence, read N- to C-terminus: Probable serine/threonine-protein kinase DDB_G0284251 (496 aa).

Residues 1 to 13 (MIEINNNHNNGNG) show a composition bias toward low complexity. Positions 1-25 (MIEINNNHNNGNGKQFPSSQIMPDS) are disordered. The 253-residue stretch at 36 to 288 (YTLGEKIGRG…AQELLQHPIF (253 aa)) folds into the Protein kinase domain. ATP-binding positions include 42–50 (IGRGAFGQV) and lysine 65. Aspartate 158 acts as the Proton acceptor in catalysis. Positions 323–345 (DWGSSSSTSGSSTPLSSSSSSSN) are disordered. The stretch at 353-386 (EDFNKLQTTIKQQAQTISNLSEEILILKKELKEK) forms a coiled coil. Residues 454-496 (PQLTPSSSRENISLSNSSSSIPNPNQNQNQNNKSKSKKFGFFS) are disordered. Residues 458–486 (PSSSRENISLSNSSSSIPNPNQNQNQNNK) show a composition bias toward low complexity. Basic residues predominate over residues 487–496 (SKSKKFGFFS).

This sequence belongs to the protein kinase superfamily. STE Ser/Thr protein kinase family. Mg(2+) serves as cofactor.

It catalyses the reaction L-seryl-[protein] + ATP = O-phospho-L-seryl-[protein] + ADP + H(+). It carries out the reaction L-threonyl-[protein] + ATP = O-phospho-L-threonyl-[protein] + ADP + H(+). This is Probable serine/threonine-protein kinase DDB_G0284251 from Dictyostelium discoideum (Social amoeba).